The following is a 54-amino-acid chain: Large ribosomal subunit protein bL32 (54 aa).

It belongs to the bacterial ribosomal protein bL32 family.

The polypeptide is Large ribosomal subunit protein bL32 (Buchnera aphidicola subsp. Baizongia pistaciae (strain Bp)).